The chain runs to 342 residues: Holliday junction branch migration complex subunit RuvB (342 aa).

Positions 4–182 (TDRLLSAGRR…FGIPIRLQFY (179 aa)) are large ATPase domain (RuvB-L). Leu-21, Arg-22, Gly-63, Lys-66, Thr-67, Thr-68, Arg-172, Tyr-182, and Arg-219 together coordinate ATP. Thr-67 is a Mg(2+) binding site. Residues 183 to 253 (TVEELERVVS…VADQSLNRLE (71 aa)) are small ATPAse domain (RuvB-S). The interval 256–342 (NLGLDAMDRR…EAGQDGLFDV (87 aa)) is head domain (RuvB-H). DNA contacts are provided by Arg-292, Arg-311, and Arg-316.

Belongs to the RuvB family. As to quaternary structure, homohexamer. Forms an RuvA(8)-RuvB(12)-Holliday junction (HJ) complex. HJ DNA is sandwiched between 2 RuvA tetramers; dsDNA enters through RuvA and exits via RuvB. An RuvB hexamer assembles on each DNA strand where it exits the tetramer. Each RuvB hexamer is contacted by two RuvA subunits (via domain III) on 2 adjacent RuvB subunits; this complex drives branch migration. In the full resolvosome a probable DNA-RuvA(4)-RuvB(12)-RuvC(2) complex forms which resolves the HJ.

Its subcellular location is the cytoplasm. The enzyme catalyses ATP + H2O = ADP + phosphate + H(+). The RuvA-RuvB-RuvC complex processes Holliday junction (HJ) DNA during genetic recombination and DNA repair, while the RuvA-RuvB complex plays an important role in the rescue of blocked DNA replication forks via replication fork reversal (RFR). RuvA specifically binds to HJ cruciform DNA, conferring on it an open structure. The RuvB hexamer acts as an ATP-dependent pump, pulling dsDNA into and through the RuvAB complex. RuvB forms 2 homohexamers on either side of HJ DNA bound by 1 or 2 RuvA tetramers; 4 subunits per hexamer contact DNA at a time. Coordinated motions by a converter formed by DNA-disengaged RuvB subunits stimulates ATP hydrolysis and nucleotide exchange. Immobilization of the converter enables RuvB to convert the ATP-contained energy into a lever motion, pulling 2 nucleotides of DNA out of the RuvA tetramer per ATP hydrolyzed, thus driving DNA branch migration. The RuvB motors rotate together with the DNA substrate, which together with the progressing nucleotide cycle form the mechanistic basis for DNA recombination by continuous HJ branch migration. Branch migration allows RuvC to scan DNA until it finds its consensus sequence, where it cleaves and resolves cruciform DNA. This chain is Holliday junction branch migration complex subunit RuvB, found in Rhizorhabdus wittichii (strain DSM 6014 / CCUG 31198 / JCM 15750 / NBRC 105917 / EY 4224 / RW1) (Sphingomonas wittichii).